Here is a 257-residue protein sequence, read N- to C-terminus: DNA-binding and peroxide stress resistance protein YaaA (257 aa).

A Helix-hairpin-helix motif is present at residues 35 to 66; it reads IGIARKLSAPQIGKLMSISDKLADLNATRFHD.

The protein belongs to the UPF0246 family.

Its subcellular location is the cytoplasm. Its function is as follows. Protects bacteria from neutrophil-related defense upon infection of mammals. Binds DNA. In Klebsiella pneumoniae subsp. pneumoniae (strain HS11286), this protein is DNA-binding and peroxide stress resistance protein YaaA.